Reading from the N-terminus, the 473-residue chain is Bifunctional protein HldE (473 aa).

Residues 1–316 are ribokinase; the sequence is MILPDFSLAR…AIAIHGQRAP (316 aa). 193-196 contributes to the ATP binding site; sequence NLSE. Residue aspartate 262 is part of the active site. The segment at 342–473 is cytidylyltransferase; it reads VTNGCFDLLH…TRIIEAIRNG (132 aa).

This sequence in the N-terminal section; belongs to the carbohydrate kinase PfkB family. In the C-terminal section; belongs to the cytidylyltransferase family. As to quaternary structure, homodimer.

It catalyses the reaction D-glycero-beta-D-manno-heptose 7-phosphate + ATP = D-glycero-beta-D-manno-heptose 1,7-bisphosphate + ADP + H(+). It carries out the reaction D-glycero-beta-D-manno-heptose 1-phosphate + ATP + H(+) = ADP-D-glycero-beta-D-manno-heptose + diphosphate. Its pathway is nucleotide-sugar biosynthesis; ADP-L-glycero-beta-D-manno-heptose biosynthesis; ADP-L-glycero-beta-D-manno-heptose from D-glycero-beta-D-manno-heptose 7-phosphate: step 1/4. It participates in nucleotide-sugar biosynthesis; ADP-L-glycero-beta-D-manno-heptose biosynthesis; ADP-L-glycero-beta-D-manno-heptose from D-glycero-beta-D-manno-heptose 7-phosphate: step 3/4. Catalyzes the phosphorylation of D-glycero-D-manno-heptose 7-phosphate at the C-1 position to selectively form D-glycero-beta-D-manno-heptose-1,7-bisphosphate. In terms of biological role, catalyzes the ADP transfer from ATP to D-glycero-beta-D-manno-heptose 1-phosphate, yielding ADP-D-glycero-beta-D-manno-heptose. The chain is Bifunctional protein HldE from Methylococcus capsulatus (strain ATCC 33009 / NCIMB 11132 / Bath).